The chain runs to 266 residues: Transcription factor BIP1 (266 aa).

The interval 1 to 73 (MAMYMPSTAS…DREAQRAIRA (73 aa)) is disordered. Polar residues-rich tracts occupy residues 7–22 (STASSTTHIRSPSGTP) and 47–56 (RSVSTLTPSQ). In terms of domain architecture, bZIP spans 54–95 (PSQLARKRANDREAQRAIRARTKEHIERLEREVEELKSKQNR). Positions 59 to 81 (RKRANDREAQRAIRARTKEHIER) are basic motif. Residues 61–73 (RANDREAQRAIRA) show a composition bias toward basic and acidic residues. Residues 82–89 (LEREVEEL) are leucine-zipper.

It belongs to the bZIP family. In terms of tissue distribution, expressed in appressoria.

Its subcellular location is the nucleus. Its function is as follows. Transcription factor that is required for infection of plants hosts. Is not implicated in the development of appressoria or the subsequent penetration of host leaves, but is necessary for the initial establishment of the fungus within plant cells by orchestrating the expression of a unique set of early invasion-related genes within appressoria, encoding secreted effectors, enzymes, secondary metabolism-related enzymes, and signaling membrane receptors. Controls the expression of targeted genes by interacting directly with a 5'-TGACTC-3' motif present in their promoters. This Pyricularia oryzae (strain 70-15 / ATCC MYA-4617 / FGSC 8958) (Rice blast fungus) protein is Transcription factor BIP1.